The sequence spans 1144 residues: PAN2-PAN3 deadenylation complex catalytic subunit PAN2 (1144 aa).

WD repeat units follow at residues 27–66 (KKEK…YTRH), 153–193 (SSTY…VIHS), 196–233 (GHSA…NVYD), and 302–341 (HPCK…SGFT). The interval 344 to 481 (AAVLEYQDYP…LLEYKPSNNI (138 aa)) is linker. In terms of domain architecture, USP spans 482 to 887 (DIPPAYSKLQ…TPEIVVYSDA (406 aa)). The region spanning 939-1110 (VALDAEFVSL…EDAHTALLLY (172 aa)) is the Exonuclease domain. Residues aspartate 942, glutamate 944, aspartate 1051, and aspartate 1102 each contribute to the a divalent metal cation site.

It belongs to the peptidase C19 family. PAN2 subfamily. In terms of assembly, forms a heterotrimer with an asymmetric homodimer of the regulatory subunit PAN3 to form the poly(A)-nuclease (PAN) deadenylation complex. It depends on a divalent metal cation as a cofactor.

Its subcellular location is the cytoplasm. It catalyses the reaction Exonucleolytic cleavage of poly(A) to 5'-AMP.. With respect to regulation, positively regulated by the regulatory subunit PAN3. Functionally, catalytic subunit of the poly(A)-nuclease (PAN) deadenylation complex, one of two cytoplasmic mRNA deadenylases involved in mRNA turnover. PAN specifically shortens poly(A) tails of RNA and the activity is stimulated by poly(A)-binding protein PAB1. PAN deadenylation is followed by rapid degradation of the shortened mRNA tails by the CCR4-NOT complex. Deadenylated mRNAs are then degraded by two alternative mechanisms, namely exosome-mediated 3'-5' exonucleolytic degradation, or deadenylation-dependent mRNA decaping and subsequent 5'-3' exonucleolytic degradation by XRN1. May also be involved in post-transcriptional maturation of mRNA poly(A) tails. The chain is PAN2-PAN3 deadenylation complex catalytic subunit PAN2 from Kluyveromyces lactis (strain ATCC 8585 / CBS 2359 / DSM 70799 / NBRC 1267 / NRRL Y-1140 / WM37) (Yeast).